The chain runs to 409 residues: uncharacterized protein (409 aa).

A run of 12 helical transmembrane segments spans residues 3–23 (IIVKIPVWMLLSLFILSPTTE), 43–63 (ITQITSTLYFLGFAVGILSLG), 73–93 (PIVLLGLFIYIVSSIISIFSV), 95–115 (IEMLMIARFIQAFGVSVGSVI), 135–155 (ILSPWLLFIPSLGSYIGGYII), 162–182 (YVFVFFSLIGTILLALYYKIL), 209–229 (ILWLYAFIIGAFNGIYYGFFI), 248–268 (KLAFLLSFSAIFGGFLGGYLI), 283–303 (FIFSLCGCILFVVNAFILEFI), 309–329 (LAISMIFVPMMIHIIGHSLLI), 346–366 (TAGSIFGAIYYIVIAAVTYCV), and 379–399 (LLCLVSSISSVISFYYICILY).

This sequence belongs to the major facilitator superfamily. Bcr/CmlA family.

The protein localises to the cell inner membrane. This is an uncharacterized protein from Rickettsia typhi (strain ATCC VR-144 / Wilmington).